A 580-amino-acid chain; its full sequence is Thymidine kinase (580 aa).

Disordered stretches follow at residues 1 to 60 (MAEG…KSVK) and 133 to 157 (VCGRPPLPPPNHPPPATRPADASMG). The segment covering 137 to 149 (PPLPPPNHPPPAT) has biased composition (pro residues). An ATP-binding site is contributed by 260–267 (GVMGVGKS). Catalysis depends on Glu287, which acts as the Proton acceptor. Gln325 serves as a coordination point for substrate. Residue Arg415 coordinates ATP. Arg421 contacts substrate.

It belongs to the herpesviridae thymidine kinase family. As to quaternary structure, homodimer.

It catalyses the reaction thymidine + ATP = dTMP + ADP + H(+). Functionally, catalyzes the transfer of the gamma-phospho group of ATP to thymidine to generate dTMP in the salvage pathway of pyrimidine synthesis. The dTMP serves as a substrate for DNA polymerase during viral DNA replication. Allows the virus to be reactivated and to grow in non-proliferative cells lacking a high concentration of phosphorylated nucleic acid precursors. This Human herpesvirus 8 type P (isolate GK18) (HHV-8) protein is Thymidine kinase.